We begin with the raw amino-acid sequence, 209 residues long: Ribosomal RNA large subunit methyltransferase E (209 aa).

Residues glycine 63, tryptophan 65, aspartate 83, aspartate 99, and aspartate 124 each coordinate S-adenosyl-L-methionine. The active-site Proton acceptor is lysine 164.

It belongs to the class I-like SAM-binding methyltransferase superfamily. RNA methyltransferase RlmE family.

It is found in the cytoplasm. The catalysed reaction is uridine(2552) in 23S rRNA + S-adenosyl-L-methionine = 2'-O-methyluridine(2552) in 23S rRNA + S-adenosyl-L-homocysteine + H(+). Functionally, specifically methylates the uridine in position 2552 of 23S rRNA at the 2'-O position of the ribose in the fully assembled 50S ribosomal subunit. The polypeptide is Ribosomal RNA large subunit methyltransferase E (Pseudoalteromonas translucida (strain TAC 125)).